The sequence spans 366 residues: Mitogen-activated protein kinase CPK1 (366 aa).

The Protein kinase domain maps to 17-302 (KLEEIVGEGA…SPSKRITVEE (286 aa)). ATP contacts are provided by residues 22-30 (VGEGAYGLV) and K45. Catalysis depends on D140, which acts as the Proton acceptor. T181 carries the post-translational modification Phosphothreonine. The TXY signature appears at 181–183 (TEY). Y183 carries the phosphotyrosine modification.

Belongs to the protein kinase superfamily. CMGC Ser/Thr protein kinase family. MAP kinase subfamily. It depends on Mg(2+) as a cofactor. Post-translationally, dually phosphorylated on Thr-181 and Tyr-183, which activates the enzyme.

The catalysed reaction is L-seryl-[protein] + ATP = O-phospho-L-seryl-[protein] + ADP + H(+). It catalyses the reaction L-threonyl-[protein] + ATP = O-phospho-L-threonyl-[protein] + ADP + H(+). Activated by tyrosine and threonine phosphorylation. In terms of biological role, responds to activation by environmental stress by phosphorylating downstream targets. In Cryptococcus neoformans var. neoformans serotype D (strain B-3501A) (Filobasidiella neoformans), this protein is Mitogen-activated protein kinase CPK1 (CPK1).